The primary structure comprises 779 residues: Phosphoribosylformylglycinamidine synthase subunit PurL (779 aa).

The active site involves His-52. ATP contacts are provided by Tyr-55 and Lys-94. Glu-96 serves as a coordination point for Mg(2+). Residues Ser-97–His-100 and Arg-119 each bind substrate. The active-site Proton acceptor is His-98. Asp-120 is a binding site for Mg(2+). Gln-243 serves as a coordination point for substrate. Residue Asp-271 participates in Mg(2+) binding. Glu-315–Gln-317 lines the substrate pocket. Asn-523 and Gly-560 together coordinate ATP. Mg(2+) is bound at residue Asn-561. Substrate is bound at residue Ser-563.

It belongs to the FGAMS family. Monomer. Part of the FGAM synthase complex composed of 1 PurL, 1 PurQ and 2 PurS subunits.

Its subcellular location is the cytoplasm. It carries out the reaction N(2)-formyl-N(1)-(5-phospho-beta-D-ribosyl)glycinamide + L-glutamine + ATP + H2O = 2-formamido-N(1)-(5-O-phospho-beta-D-ribosyl)acetamidine + L-glutamate + ADP + phosphate + H(+). Its pathway is purine metabolism; IMP biosynthesis via de novo pathway; 5-amino-1-(5-phospho-D-ribosyl)imidazole from N(2)-formyl-N(1)-(5-phospho-D-ribosyl)glycinamide: step 1/2. Part of the phosphoribosylformylglycinamidine synthase complex involved in the purines biosynthetic pathway. Catalyzes the ATP-dependent conversion of formylglycinamide ribonucleotide (FGAR) and glutamine to yield formylglycinamidine ribonucleotide (FGAM) and glutamate. The FGAM synthase complex is composed of three subunits. PurQ produces an ammonia molecule by converting glutamine to glutamate. PurL transfers the ammonia molecule to FGAR to form FGAM in an ATP-dependent manner. PurS interacts with PurQ and PurL and is thought to assist in the transfer of the ammonia molecule from PurQ to PurL. In Prochlorococcus marinus (strain MIT 9515), this protein is Phosphoribosylformylglycinamidine synthase subunit PurL.